The sequence spans 794 residues: Ent-copalyl diphosphate synthase 2 (794 aa).

Residues 1–35 (MSSSSNVTSLPRLTTAGGVFPREMVRVHSSCNILR) constitute a chloroplast transit peptide. Substrate is bound at residue Lys238. Residues Asp369 and Asp371 each contribute to the Mg(2+) site. The DXDD motif signature appears at 369-372 (DVDD). Residue Lys455 coordinates substrate.

Belongs to the terpene synthase family. Tpsc subfamily. Mg(2+) is required as a cofactor. As to expression, expressed in leaves.

The protein resides in the plastid. Its subcellular location is the chloroplast. It carries out the reaction (2E,6E,10E)-geranylgeranyl diphosphate = ent-copalyl diphosphate. It functions in the pathway secondary metabolite biosynthesis; terpenoid biosynthesis. Its function is as follows. Involved in the biosynthesis of ent-kaurene diterpenoids natural products such as oridonin, miltiradiene, eriocalyxin B and nezukol, known to exhibit antitumor, anti-inflammatory and antibacterial activities. Catalyzes the conversion of (2E,6E,10E)-geranylgeranyl diphosphate (GGPP) to ent-copalyl diphosphate (ent-CPP). This Isodon eriocalyx (Plectranthus eriocalyx) protein is Ent-copalyl diphosphate synthase 2.